We begin with the raw amino-acid sequence, 279 residues long: Diaminopimelate epimerase (279 aa).

Positions 12, 45, and 65 each coordinate substrate. The active-site Proton donor is the Cys74. Substrate is bound by residues Gly75–Asn76, Asn162, Asn195, and Glu213–Arg214. Cys222 (proton acceptor) is an active-site residue. Position 223–224 (Gly223–Ser224) interacts with substrate.

The protein belongs to the diaminopimelate epimerase family. Homodimer.

Its subcellular location is the cytoplasm. The catalysed reaction is (2S,6S)-2,6-diaminopimelate = meso-2,6-diaminopimelate. It functions in the pathway amino-acid biosynthesis; L-lysine biosynthesis via DAP pathway; DL-2,6-diaminopimelate from LL-2,6-diaminopimelate: step 1/1. Its function is as follows. Catalyzes the stereoinversion of LL-2,6-diaminopimelate (L,L-DAP) to meso-diaminopimelate (meso-DAP), a precursor of L-lysine and an essential component of the bacterial peptidoglycan. This is Diaminopimelate epimerase from Shewanella loihica (strain ATCC BAA-1088 / PV-4).